A 447-amino-acid chain; its full sequence is Beta-glucuronosyltransferase GlcAT14A (447 aa).

Residues 1 to 33 (MKKLRSYYSNVRHHQNHHHHHHHHSNIVSSERK) are Cytoplasmic-facing. The chain crosses the membrane as a helical; Signal-anchor for type II membrane protein span at residues 34-54 (WIFFPLLIGSIFALFLLFLTT). Over 55–447 (TLTSPTGGVR…TENFRSKQCK (393 aa)) the chain is Lumenal. N-linked (GlcNAc...) asparagine glycosylation is found at N151, N200, N329, and N405.

It belongs to the glycosyltransferase 14 family.

The protein localises to the golgi apparatus membrane. In terms of biological role, beta-glucuronosyltransferase involved in the biosynthesis of type II arabinogalactan (AG). Modifies both the beta-1,6-linked galactan and beta-1,3-linked galactan present in type II AG. Transfers glucuronate to beta-1,6-galactooligosaccharides with degrees of polymerization ranging from 3 to 11. Transfers glucuronate to beta-1,3-galactooligosaccharides with degrees of polymerization ranging from 5 to 7. The addition of glucuronate at the O6 position may terminate galactose chain extension. Required for cell elongation during seedling growth. The sequence is that of Beta-glucuronosyltransferase GlcAT14A from Arabidopsis thaliana (Mouse-ear cress).